Consider the following 251-residue polypeptide: Ubiquinone/menaquinone biosynthesis C-methyltransferase UbiE (251 aa).

Residues T74, D95, 123 to 124 (NA), and S140 contribute to the S-adenosyl-L-methionine site.

Belongs to the class I-like SAM-binding methyltransferase superfamily. MenG/UbiE family.

It carries out the reaction a 2-demethylmenaquinol + S-adenosyl-L-methionine = a menaquinol + S-adenosyl-L-homocysteine + H(+). The catalysed reaction is a 2-methoxy-6-(all-trans-polyprenyl)benzene-1,4-diol + S-adenosyl-L-methionine = a 5-methoxy-2-methyl-3-(all-trans-polyprenyl)benzene-1,4-diol + S-adenosyl-L-homocysteine + H(+). It participates in quinol/quinone metabolism; menaquinone biosynthesis; menaquinol from 1,4-dihydroxy-2-naphthoate: step 2/2. It functions in the pathway cofactor biosynthesis; ubiquinone biosynthesis. Functionally, methyltransferase required for the conversion of demethylmenaquinol (DMKH2) to menaquinol (MKH2) and the conversion of 2-polyprenyl-6-methoxy-1,4-benzoquinol (DDMQH2) to 2-polyprenyl-3-methyl-6-methoxy-1,4-benzoquinol (DMQH2). The protein is Ubiquinone/menaquinone biosynthesis C-methyltransferase UbiE of Escherichia fergusonii (strain ATCC 35469 / DSM 13698 / CCUG 18766 / IAM 14443 / JCM 21226 / LMG 7866 / NBRC 102419 / NCTC 12128 / CDC 0568-73).